A 418-amino-acid polypeptide reads, in one-letter code: Serine protease inhibitor A3K (418 aa).

An N-terminal signal peptide occupies residues 1–21; the sequence is MAFIVAMGMILMAGICPAVLC. Residues Asn-39, Asn-105, Asn-185, and Asn-270 are each glycosylated (N-linked (GlcNAc...) asparagine). Residues 369–394 form an RCL region; it reads GTEAAAATGVIGGIRKAILPAVHFNR.

This sequence belongs to the serpin family. In terms of tissue distribution, expressed in liver and secreted in plasma.

It is found in the secreted. Its function is as follows. Contrapsin inhibits trypsin-like proteases. The sequence is that of Serine protease inhibitor A3K (Serpina3k) from Mus musculus (Mouse).